The primary structure comprises 487 residues: Probable Xaa-Pro aminopeptidase CPSG_02684 (487 aa).

The span at 1–10 (MAGSNTLSSS) shows a compositional bias: polar residues. Residues 1 to 22 (MAGSNTLSSSEHGDDPRGHSYS) are disordered. Mn(2+)-binding residues include Asp275, Asp286, Glu421, and Glu460.

This sequence belongs to the peptidase M24B family. Mn(2+) is required as a cofactor.

It catalyses the reaction Release of any N-terminal amino acid, including proline, that is linked to proline, even from a dipeptide or tripeptide.. Functionally, catalyzes the removal of a penultimate prolyl residue from the N-termini of peptides. The protein is Probable Xaa-Pro aminopeptidase CPSG_02684 of Coccidioides posadasii (strain RMSCC 757 / Silveira) (Valley fever fungus).